A 97-amino-acid chain; its full sequence is YcgL domain-containing protein Pfl01_1389 (97 aa).

The 85-residue stretch at arginine 3 to proline 87 folds into the YcgL domain.

This is YcgL domain-containing protein Pfl01_1389 from Pseudomonas fluorescens (strain Pf0-1).